The primary structure comprises 493 residues: Occludin (493 aa).

The Cytoplasmic portion of the chain corresponds to 1 to 47 (MYSRPSNYAPSKDVYGGEMRSQPAYSYYPEEEIQHFYRWSSPPGIIK). Residues 41–250 (SPPGIIKIMS…IIFFAVKTRK (210 aa)) enclose the MARVEL domain. A helical transmembrane segment spans residues 48-70 (IMSILIVVMCVGIFACVASTLPW). The Extracellular portion of the chain corresponds to 71-116 (DLDITGQSMGYGMGSGSYSGGYTGYGFGGSQMGLGFAYGGNYTDPR). A helical transmembrane segment spans residues 117-141 (AAKGFILAMAAFCFIIGLVIFVMLV). Residues 142 to 151 (TRTPLSTSRK) lie on the Cytoplasmic side of the membrane. The helical transmembrane segment at 152-176 (FYLIVIIVSAIIGGLVFIATIVYTV) threads the bilayer. Topologically, residues 177–224 (GVNPVAQASGSAFYTQIVSICNQFYSPVQTGVFVNQYLYHYCVVEPQE) are extracellular. A disulfide bridge connects residues Cys197 and Cys218. A helical membrane pass occupies residues 225 to 246 (AIAIVLGFLIVVAFAIIIFFAV). Over 247 to 493 (KTRKKINQYG…IKQMVSNYDK (247 aa)) the chain is Cytoplasmic. The tract at residues 334–407 (YGMSPRHYSS…TKQRQEYKQE (74 aa)) is disordered. Over residues 352–361 (APPKKRPGKP) the composition is skewed to basic residues. The residue at position 375 (Thr375) is a Phosphothreonine; by CK2; in vitro. Phosphoserine; by CK2; in vitro is present on Ser379. The span at 379–389 (SADELEDDSWD) shows a compositional bias: acidic residues. Residues 386–493 (DSWDSEYPPI…IKQMVSNYDK (108 aa)) form the OCEL domain. Residues 396–428 (TQTKQRQEYKQEFASDLHEYKRLQAELDELSKI) adopt a coiled-coil conformation.

This sequence belongs to the ELL/occludin family. In terms of assembly, interacts in vitro with cingulin, possibly directly. Interacts with ZO-1. Post-translationally, phosphorylated. In terms of tissue distribution, localized at tight junctions of both epithelial and endothelial cells.

It localises to the cell membrane. The protein resides in the cell junction. The protein localises to the tight junction. Functionally, probably plays a role in the formation and regulation of the tight junction (TJ) paracellular permeability barrier. In Xenopus laevis (African clawed frog), this protein is Occludin (ocln).